Here is a 102-residue protein sequence, read N- to C-terminus: EPIDERMAL PATTERNING FACTOR-like protein 9 (102 aa).

The first 31 residues, 1–31, serve as a signal peptide directing secretion; it reads MKHEMMNIKPRCITIFFLLFALLLGNYVVQA. Cystine bridges form between Cys65–Cys98, Cys70–Cys77, and Cys73–Cys100.

Belongs to the plant cysteine rich small secretory peptide family. Epidermal patterning factor subfamily. Interacts with ERECTA and TMM. In terms of tissue distribution, expressed in immature organs, including leaves, stems and flower buds, but not in roots, shoot apical meristem and petals. Detected in the mesophyll tissues but not in the epidermal tissues where stomata develop.

The protein localises to the secreted. It localises to the extracellular space. Its subcellular location is the apoplast. Its function is as follows. Positively regulates stomatal density and patterning. Acts by competing with EPF2 (AC Q8LC53) for the same receptors, ERECTA (AC Q42371) and TMM (AC Q9SSD1). Not cleaved by the protease CRSP (AC Q9LNU1). This Arabidopsis thaliana (Mouse-ear cress) protein is EPIDERMAL PATTERNING FACTOR-like protein 9.